The following is a 387-amino-acid chain: Diels-Alderase ORF3 (387 aa).

The protein belongs to the Diels-Alderase family.

It functions in the pathway secondary metabolite biosynthesis. Functionally, diels-Alderase; part of the gene cluster that mediates the biosynthesis of a tyrosine-derived cytochalasan acting as a fungal signal recognized by resistant rice plants and leads to avirulence in Pi33 resistant rice cultivars. The first step in the pathway is catalyzed by the hybrid PKS-NRPS ACE1, assisted by the enoyl reductase RAP1, that are responsible for fusion of the tyrosine precursor and the polyketide backbone. The polyketide synthase module (PKS) of ACE1 is responsible for the synthesis of the polyketide backbone and the downstream nonribosomal peptide synthetase (NRPS) amidates the carboxyl end of the polyketide with the tyrosine precursor. Because ACE1 lacks a designated enoylreductase (ER) domain, the required activity is provided the enoyl reductase RAP1. Reduction by the hydrolyase ORFZ, followed by dehydration and intra-molecular Diels-Alder cyclization by the Diels-Alderase ORF3 then yield the required isoindolone-fused macrocycle. A number of oxidative steps catalyzed by the tailoring enzymes identified within the cluster, including cytochrome P450 monooxygenases CYP1 to CYP4, the FAD-linked oxidoreductase OXR2 and the short-chain dehydrogenase/reductase OXR1, are further required to afford the final cytochalasans that confer avirulence and which have still to be identified. The monooxygenase CYP1 has been shown to be a site-selective C-18 hydroxylase whereas the function of CYP3 is the site-selective epoxidation of the C-6/C-7 olefin that is present in some intermediate compounds. Finally, SYN2 and RAP2 are not required for avirulence in Pi33 resistant rice cultivars. This chain is Diels-Alderase ORF3, found in Pyricularia oryzae (strain 70-15 / ATCC MYA-4617 / FGSC 8958) (Rice blast fungus).